Reading from the N-terminus, the 498-residue chain is Histidine--tRNA ligase (498 aa).

The protein belongs to the class-II aminoacyl-tRNA synthetase family. In terms of assembly, homodimer.

It is found in the cytoplasm. The enzyme catalyses tRNA(His) + L-histidine + ATP = L-histidyl-tRNA(His) + AMP + diphosphate + H(+). This is Histidine--tRNA ligase from Bartonella quintana (strain Toulouse) (Rochalimaea quintana).